The chain runs to 564 residues: NAC domain-containing protein 16 (564 aa).

The NAC domain maps to 16–166 (SAPGFRFHPT…YYALYKLYKK (151 aa)). The DNA-binding element occupies 115–172 (VGLKKTLVFYRGRAPNGERTDWVMHEYTMDEEELGRCKNAKEYYALYKLYKKSGAGPK). The chain crosses the membrane as a helical span at residues 535–555 (FLLLSIMGALCAIFWVFKATV).

As to expression, expressed in roots, rosette leaves, shoot apex, stems and flowers.

It localises to the membrane. The protein resides in the nucleus. Transcriptional activator activated by proteolytic cleavage through regulated intramembrane proteolysis (RIP). Transcriptional activator that promotes leaf senescence by up-regulating senescence-associated genes in response to developmental and stress-induced senescence signals. Functions in salt and oxidative stress-responsive signaling pathways. Binds to the promoter of NAC029/NAP and NAC059/ORS1 genes. In Arabidopsis thaliana (Mouse-ear cress), this protein is NAC domain-containing protein 16.